Here is a 147-residue protein sequence, read N- to C-terminus: Deoxyuridine 5'-triphosphate nucleotidohydrolase (147 aa).

Substrate is bound by residues 67 to 69 (RSG), N80, and 84 to 86 (LID).

It belongs to the dUTPase family. It depends on Mg(2+) as a cofactor.

It carries out the reaction dUTP + H2O = dUMP + diphosphate + H(+). The protein operates within pyrimidine metabolism; dUMP biosynthesis; dUMP from dCTP (dUTP route): step 2/2. Its function is as follows. This enzyme is involved in nucleotide metabolism: it produces dUMP, the immediate precursor of thymidine nucleotides and it decreases the intracellular concentration of dUTP so that uracil cannot be incorporated into DNA. The polypeptide is Deoxyuridine 5'-triphosphate nucleotidohydrolase (Gloeobacter violaceus (strain ATCC 29082 / PCC 7421)).